Consider the following 282-residue polypeptide: 2-dehydro-3-deoxyphosphooctonate aldolase (282 aa).

This sequence belongs to the KdsA family.

It localises to the cytoplasm. It carries out the reaction D-arabinose 5-phosphate + phosphoenolpyruvate + H2O = 3-deoxy-alpha-D-manno-2-octulosonate-8-phosphate + phosphate. The protein operates within carbohydrate biosynthesis; 3-deoxy-D-manno-octulosonate biosynthesis; 3-deoxy-D-manno-octulosonate from D-ribulose 5-phosphate: step 2/3. Its pathway is bacterial outer membrane biogenesis; lipopolysaccharide biosynthesis. In Bordetella avium (strain 197N), this protein is 2-dehydro-3-deoxyphosphooctonate aldolase.